We begin with the raw amino-acid sequence, 385 residues long: S-adenosylmethionine synthase (385 aa).

Position 16 (histidine 16) interacts with ATP. Aspartate 18 serves as a coordination point for Mg(2+). Glutamate 44 is a binding site for K(+). Glutamate 57 and glutamine 100 together coordinate L-methionine. Positions 100–110 (QSPDINQGVDR) are flexible loop. Residues 164–166 (DGK), 230–231 (KF), aspartate 239, 245–246 (RK), alanine 262, and lysine 266 contribute to the ATP site. Aspartate 239 contributes to the L-methionine binding site. Lysine 270 is a binding site for L-methionine.

It belongs to the AdoMet synthase family. As to quaternary structure, homotetramer; dimer of dimers. Mg(2+) serves as cofactor. Requires K(+) as cofactor.

Its subcellular location is the cytoplasm. The catalysed reaction is L-methionine + ATP + H2O = S-adenosyl-L-methionine + phosphate + diphosphate. It functions in the pathway amino-acid biosynthesis; S-adenosyl-L-methionine biosynthesis; S-adenosyl-L-methionine from L-methionine: step 1/1. In terms of biological role, catalyzes the formation of S-adenosylmethionine (AdoMet) from methionine and ATP. The overall synthetic reaction is composed of two sequential steps, AdoMet formation and the subsequent tripolyphosphate hydrolysis which occurs prior to release of AdoMet from the enzyme. This Helicobacter pylori (strain J99 / ATCC 700824) (Campylobacter pylori J99) protein is S-adenosylmethionine synthase.